The chain runs to 74 residues: Antimicrobial peptide AcrAP2 (74 aa).

The signal sequence occupies residues 1–22; the sequence is MEIKYLLTVFLVLLIVSDHCQA. Lysine 40 bears the Lysine amide mark. The propeptide occupies 46–74; it reads NLDGQIDRFRNFRKRDAELEELLSKLPIY.

This sequence belongs to the non-disulfide-bridged peptide (NDBP) superfamily. Short antimicrobial peptide (group 4) family. As to expression, expressed by the venom gland.

Its subcellular location is the secreted. The protein localises to the target cell membrane. Functionally, has antimicrobial activity against the Gram-positive bacteria S.aureus (MIC=8 uM) and the yeast C.albicans (MIC=16 uM). Causes hemolysis on horse erythrocytes (64 uM for 100% hemolysis). Minimum bactericidal concentrations have also been tested against S.aureus and is four-fold higher (MBC=32 uM). This chain is Antimicrobial peptide AcrAP2, found in Androctonus crassicauda (Arabian fat-tailed scorpion).